The sequence spans 429 residues: Enolase (429 aa).

(2R)-2-phosphoglycerate is bound at residue glutamine 162. The Proton donor role is filled by glutamate 204. Positions 241, 283, and 310 each coordinate Mg(2+). The (2R)-2-phosphoglycerate site is built by lysine 335, arginine 364, serine 365, and lysine 386. Lysine 335 (proton acceptor) is an active-site residue.

Belongs to the enolase family. Requires Mg(2+) as cofactor.

It is found in the cytoplasm. Its subcellular location is the secreted. The protein localises to the cell surface. The enzyme catalyses (2R)-2-phosphoglycerate = phosphoenolpyruvate + H2O. It participates in carbohydrate degradation; glycolysis; pyruvate from D-glyceraldehyde 3-phosphate: step 4/5. Catalyzes the reversible conversion of 2-phosphoglycerate (2-PG) into phosphoenolpyruvate (PEP). It is essential for the degradation of carbohydrates via glycolysis. This is Enolase from Mycobacterium sp. (strain JLS).